We begin with the raw amino-acid sequence, 504 residues long: Histidine ammonia-lyase (504 aa).

The 5-imidazolinone (Ala-Gly) cross-link spans 141 to 143 (ASG). Ser142 carries the post-translational modification 2,3-didehydroalanine (Ser).

This sequence belongs to the PAL/histidase family. In terms of processing, contains an active site 4-methylidene-imidazol-5-one (MIO), which is formed autocatalytically by cyclization and dehydration of residues Ala-Ser-Gly.

The protein localises to the cytoplasm. The catalysed reaction is L-histidine = trans-urocanate + NH4(+). The protein operates within amino-acid degradation; L-histidine degradation into L-glutamate; N-formimidoyl-L-glutamate from L-histidine: step 1/3. This is Histidine ammonia-lyase from Geobacillus kaustophilus (strain HTA426).